The chain runs to 487 residues: N-succinylglutamate 5-semialdehyde dehydrogenase (487 aa).

221–226 (GSSDTG) lines the NAD(+) pocket. Active-site residues include E244 and C278.

Belongs to the aldehyde dehydrogenase family. AstD subfamily.

The catalysed reaction is N-succinyl-L-glutamate 5-semialdehyde + NAD(+) + H2O = N-succinyl-L-glutamate + NADH + 2 H(+). Its pathway is amino-acid degradation; L-arginine degradation via AST pathway; L-glutamate and succinate from L-arginine: step 4/5. Catalyzes the NAD-dependent reduction of succinylglutamate semialdehyde into succinylglutamate. This is N-succinylglutamate 5-semialdehyde dehydrogenase from Burkholderia lata (strain ATCC 17760 / DSM 23089 / LMG 22485 / NCIMB 9086 / R18194 / 383).